The primary structure comprises 386 residues: Large ribosomal subunit protein uL4 (386 aa).

A compositionally biased stretch (basic and acidic residues) spans 341–357; that stretch reads VEQRRLKEKQAKLDQKR. Residues 341-386 form a disordered region; it reads VEQRRLKEKQAKLDQKRGIATPVEGAGKGRPRKTTAKPTKAKAGKK. Residues 369–386 are compositionally biased toward basic residues; the sequence is GRPRKTTAKPTKAKAGKK.

The protein belongs to the universal ribosomal protein uL4 family.

The polypeptide is Large ribosomal subunit protein uL4 (RPL4) (Urechis caupo (Innkeeper worm)).